We begin with the raw amino-acid sequence, 748 residues long: Cytosolic phospholipase A2 (748 aa).

Residues 1-178 (MSFIDPYQHI…MRKLLGPKKS (178 aa)) form a phospholipid binding region. Residue serine 2 is modified to Phosphoserine. The region spanning 6–122 (PYQHIIVEHQ…KVGEKKEVPF (117 aa)) is the C2 domain. The Ca(2+) site is built by aspartate 40, threonine 41, aspartate 43, asparagine 65, aspartate 93, alanine 94, and asparagine 95. Residues 138-739 (VCSSPDLRFS…SNVEARRFFN (602 aa)) form the PLA2c domain. Residue serine 228 is the Nucleophile of the active site. Threonine 268 bears the Phosphothreonine mark. The interval 428–458 (HIVSNDSSDSDDESQEPKGTEGEDAEREYQN) is disordered. Residues serine 434, serine 435, and serine 437 each carry the phosphoserine modification. Residues 442–458 (QEPKGTEGEDAEREYQN) are compositionally biased toward basic and acidic residues. The residue at position 505 (serine 505) is a Phosphoserine; by MAPK. Phosphoserine is present on serine 514. Lysine 540 is covalently cross-linked (Glycyl lysine isopeptide (Lys-Gly) (interchain with G-Cter in SUMO2)). Aspartate 548 (proton acceptor) is an active-site residue. Lysine 605 is covalently cross-linked (Glycyl lysine isopeptide (Lys-Gly) (interchain with G-Cter in SUMO2)). Phosphoserine occurs at positions 726 and 728.

Interacts with KAT5. Post-translationally, phosphorylated at both Ser-505 and Ser-726 in response to mitogenic stimuli.

Its subcellular location is the cytoplasm. The protein resides in the golgi apparatus membrane. It is found in the nucleus envelope. It carries out the reaction a 1,2-diacyl-sn-glycero-3-phosphocholine + H2O = a 1-acyl-sn-glycero-3-phosphocholine + a fatty acid + H(+). It catalyses the reaction a 1-O-alkyl-2-acyl-sn-glycero-3-phosphocholine + H2O = a 1-O-alkyl-sn-glycero-3-phosphocholine + a fatty acid + H(+). The catalysed reaction is a 1-acyl-sn-glycero-3-phosphocholine + H2O = sn-glycerol 3-phosphocholine + a fatty acid + H(+). The enzyme catalyses 1-hexadecanoyl-2-(5Z,8Z,11Z,14Z-eicosatetraenoyl)-sn-glycero-3-phosphocholine + H2O = 1-hexadecanoyl-sn-glycero-3-phosphocholine + (5Z,8Z,11Z,14Z)-eicosatetraenoate + H(+). It carries out the reaction 1,2-di-(5Z,8Z,11Z,14Z-eicosatetraenoyl)-sn-glycero-3-phosphocholine + H2O = 1-(5Z,8Z,11Z,14Z-eicosatetraenoyl)-sn-glycero-3-phosphocholine + (5Z,8Z,11Z,14Z)-eicosatetraenoate + H(+). It catalyses the reaction 1-octadecanoyl-2-(5Z,8Z,11Z,14Z-eicosatetraenoyl)-sn-glycero-3-phosphocholine + H2O = 1-octadecanoyl-sn-glycero-3-phosphocholine + (5Z,8Z,11Z,14Z)-eicosatetraenoate + H(+). The catalysed reaction is 1-hexadecanoyl-2-(9Z,12Z-octadecadienoyl)-sn-glycero-3-phosphocholine + H2O = (9Z,12Z)-octadecadienoate + 1-hexadecanoyl-sn-glycero-3-phosphocholine + H(+). The enzyme catalyses 1-octadecanoyl-2-(9Z,12Z,15Z-octadecatrienoyl)-sn-glycero-3-phosphocholine + H2O = (9Z,12Z,15Z)-octadecatrienoate + 1-octadecanoyl-sn-glycero-3-phosphocholine + H(+). It carries out the reaction 1-(5Z,8Z,11Z,14Z-eicosatetraenoyl)-2-hexadecanoyl-sn-glycero-3-phosphocholine + H2O = 1-(5Z,8Z,11Z,14Z-eicosatetraenoyl)-sn-glycero-3-phosphocholine + hexadecanoate + H(+). It catalyses the reaction 1-O-hexadecyl-2-(5Z,8Z,11Z,14Z)-eicosatetraenoyl-sn-glycero-3-phosphocholine + H2O = 1-O-hexadecyl-sn-glycero-3-phosphocholine + (5Z,8Z,11Z,14Z)-eicosatetraenoate + H(+). The catalysed reaction is 1,2-di-(9Z-octadecenoyl)-sn-glycero-3-phospho-(1'-sn-glycerol) + H2O = 1-(9Z-octadecenoyl)-sn-glycero-3-phospho-(1'-sn-glycerol) + (9Z)-octadecenoate + H(+). The enzyme catalyses 1-octadecanoyl-2-(5Z,8Z,11Z,14Z-eicosatetraenoyl)-sn-glycero-3-phosphate + H2O = 1-octadecanoyl-sn-glycero-3-phosphate + (5Z,8Z,11Z,14Z)-eicosatetraenoate + H(+). It carries out the reaction 1-hexadecanoyl-sn-glycero-3-phosphocholine + H2O = sn-glycerol 3-phosphocholine + hexadecanoate + H(+). It catalyses the reaction 2-(prostaglandin E2)-sn-glycero-3-phosphoethanolamine + H2O = sn-glycero-3-phosphoethanolamine + prostaglandin E2 + H(+). The catalysed reaction is 2-[(15S)-hydroxy-(5Z,8Z,11Z,13E)-eicosatetraenoyl]-sn-glycero-3-phosphocholine + H2O = (15S)-hydroxy-(5Z,8Z,11Z,13E)-eicosatetraenoate + sn-glycerol 3-phosphocholine + H(+). The enzyme catalyses 2-[(15R)-hydroxy-(5Z,8Z,11Z,13E)-eicosatetraenoyl]-sn-glycero-3-phosphocholine + H2O = (15R)-hydroxy-(5Z,8Z,11Z,13E)-eicosatetraenoate + sn-glycerol 3-phosphocholine + H(+). It carries out the reaction 2-(prostaglandin E2)-sn-glycero-3-phosphocholine + H2O = prostaglandin E2 + sn-glycerol 3-phosphocholine + H(+). It catalyses the reaction 2-[(11R)-hydroxy-(5Z,8Z,12E,14Z)-eicosatetraenoyl]-sn-glycero-3-phosphocholine + H2O = (11R)-hydroxy-(5Z,8Z,12E,14Z)-eicosatetraenoate + sn-glycerol 3-phosphocholine + H(+). The catalysed reaction is 1-(5Z,8Z,11Z,14Z-eicosatetraenoyl)-2-O-hexadecyl-sn-glycero-3-phosphocholine + H2O = 2-O-hexadecyl-sn-glycero-3-phosphocholine + (5Z,8Z,11Z,14Z)-eicosatetraenoate + H(+). The enzyme catalyses 1-octadecanoyl-2-(5Z,8Z,11Z,14Z-eicosatetraenoyl)-sn-glycero-3-phosphocholine + glycerol = 1-(5Z,8Z,11Z,14Z-eicosatetraenoyl)-glycerol + 1-octadecanoyl-sn-glycero-3-phosphocholine. It carries out the reaction 1-octadecanoyl-2-(9Z,12Z,15Z-octadecatrienoyl)-sn-glycero-3-phosphocholine + glycerol = 1-(9Z,12Z,15Z-octadecatrienoyl)-glycerol + 1-octadecanoyl-sn-glycero-3-phosphocholine. Its pathway is membrane lipid metabolism; glycerophospholipid metabolism. It participates in lipid metabolism; arachidonate metabolism. The protein operates within lipid metabolism; prostaglandin biosynthesis. It functions in the pathway lipid metabolism; leukotriene B4 biosynthesis. With respect to regulation, activated by cytosolic calcium, which is necessary for binding to membrane lipids. Activated by phosphorylation in response to mitogenic stimuli. In terms of biological role, has primarily calcium-dependent phospholipase and lysophospholipase activities, with a major role in membrane lipid remodeling and biosynthesis of lipid mediators of the inflammatory response. Plays an important role in embryo implantation and parturition through its ability to trigger prostanoid production. Preferentially hydrolyzes the ester bond of the fatty acyl group attached at sn-2 position of phospholipids (phospholipase A2 activity). Selectively hydrolyzes sn-2 arachidonoyl group from membrane phospholipids, providing the precursor for eicosanoid biosynthesis via the cyclooxygenase pathway. In an alternative pathway of eicosanoid biosynthesis, hydrolyzes sn-2 fatty acyl chain of eicosanoid lysophopholipids to release free bioactive eicosanoids. Hydrolyzes the ester bond of the fatty acyl group attached at sn-1 position of phospholipids (phospholipase A1 activity) only if an ether linkage rather than an ester linkage is present at the sn-2 position. This hydrolysis is not stereospecific. Has calcium-independent phospholipase A2 and lysophospholipase activities in the presence of phosphoinositides. Has O-acyltransferase activity. Catalyzes the transfer of fatty acyl chains from phospholipids to a primary hydroxyl group of glycerol (sn-1 or sn-3), potentially contributing to monoacylglycerol synthesis. The sequence is that of Cytosolic phospholipase A2 (PLA2G4A) from Oryctolagus cuniculus (Rabbit).